The primary structure comprises 661 residues: Transmembrane and coiled-coil domain-containing protein STS1 (661 aa).

Disordered regions lie at residues 34–71 (AHHH…GADA) and 154–185 (VGNT…DDQL). A compositionally biased stretch (low complexity) spans 59-69 (SSSSSNSGAGA). A compositionally biased stretch (basic and acidic residues) spans 175 to 184 (SPGESSHDDQ). A run of 4 helical transmembrane segments spans residues 306 to 326 (ALLA…FGAL), 333 to 353 (LVPV…GSVA), 355 to 375 (SVAV…SKMA), and 466 to 486 (LSGL…TDFI).

The protein belongs to the TMCO4 family. Interacts with PKS10/PKS2 and 4CLL9/ACOS12.

It localises to the endoplasmic reticulum membrane. Functionally, involved in anther lipids biosynthesis and is required for tapetum degradation and pollen wall formation. Required for the formation of Ubisch bodies and microspores. Possesses lipase activity in vitro toward two synthetic substrates, p-nitrophenyl acetate (pNPA) and p-nitrophenyl butyrate (pNPB). The polypeptide is Transmembrane and coiled-coil domain-containing protein STS1 (Oryza sativa subsp. japonica (Rice)).